The chain runs to 416 residues: N-acetylmuramoyl-L-alanine amidase AmiC (416 aa).

The signal sequence occupies residues 1–26 (MIKLTRRQIIRRTAGTLFALSPIASA). Positions 166–191 (RGSPEADLAQNTTPQPGRGRNGRRPV) are disordered. Residues 192–405 (IMLDPGHGGE…CAQSIASGVQ (214 aa)) enclose the MurNAc-LAA domain.

The protein belongs to the N-acetylmuramoyl-L-alanine amidase 3 family.

It is found in the periplasm. It catalyses the reaction Hydrolyzes the link between N-acetylmuramoyl residues and L-amino acid residues in certain cell-wall glycopeptides.. Its function is as follows. Cell-wall hydrolase involved in septum cleavage during cell division. The chain is N-acetylmuramoyl-L-alanine amidase AmiC (amiC) from Neisseria meningitidis serogroup B (strain ATCC BAA-335 / MC58).